We begin with the raw amino-acid sequence, 718 residues long: Tensin-4 (718 aa).

Residues 1–14 (MSSSLLTGGHVVSL) form the signal peptide. Disordered regions lie at residues 188 to 244 (RETR…GLRA) and 272 to 437 (LPHS…AKDM). Over residues 192–207 (SSSNESLIFSGNQGRG) the composition is skewed to polar residues. Residues 208 to 219 (SSPHTPSSLSNS) show a composition bias toward low complexity. A Phosphoserine modification is found at S230. A compositionally biased stretch (low complexity) spans 272–304 (LPHSSLSSYPPSSRSLGSPASSSSSLHSLDRGS). 4 stretches are compositionally biased toward polar residues: residues 306-316 (CVRSSDAQVPS), 337-349 (QASS…TNSM), 367-393 (PAQQ…QATK), and 405-415 (TSPSHLCQATK). The 108-residue stretch at 451–558 (WFKPSITREQ…ALPCKLTIPQ (108 aa)) folds into the SH2 domain. Residues 585–711 (CHTLYLTSVS…SQVISLVTAL (127 aa)) form the PTB domain.

It belongs to the PTEN phosphatase protein family. As to quaternary structure, interacts (via SH2 domain) with Rho GTPase-activating protein DLC1 (via C-terminus); the interaction is independent of DLC1 tyrosine phosphorylation. Interacts with integrin ITGB1; the interaction displaces tensin TNS3 from the ITGB1 cytoplasmic tail and promotes ITGB1 stability. Interacts (via SH2 domain) with E3 ubiquitin-protein ligase CBL (phosphorylated on 'Tyr-781'); the interaction is enhanced in the presence of EGF and reduces interaction of CBL with EGFR. Interacts (via SH2 domain) with receptor tyrosine kinase MET (when phosphorylated); the interaction increases MET protein stability.

The protein resides in the cell junction. It localises to the focal adhesion. Its subcellular location is the cytoplasm. The protein localises to the cytoskeleton. In terms of biological role, promotes EGF-induced cell migration by displacing tensin TNS3 from the cytoplasmic tail of integrin ITGB1 which results in dissociation of TNS3 from focal adhesions, disassembly of actin stress fibers and initiation of cell migration. Suppresses ligand-induced degradation of EGFR by reducing EGFR ubiquitination in the presence of EGF. Increases MET protein stability by inhibiting MET endocytosis and subsequent lysosomal degradation which leads to increased cell survival, proliferation and migration. In Rattus norvegicus (Rat), this protein is Tensin-4 (Tns4).